We begin with the raw amino-acid sequence, 602 residues long: Adenylosuccinate synthetase (602 aa).

GTP contacts are provided by residues 74–80 and 104–106; these read GDEGKGK and GHT. The Proton acceptor role is filled by aspartate 75. Mg(2+) is bound by residues aspartate 75 and glycine 104. Residues 75–78, 102–105, threonine 189, lysine 203, glutamine 315, threonine 331, and lysine 459 contribute to the IMP site; these read DEGK and NAGH. The active-site Proton donor is histidine 105. Substrate is bound at residue 455-461; that stretch reads AVTKKPR. GTP is bound by residues arginine 461 and 589 to 591; that span reads GNG.

It belongs to the adenylosuccinate synthetase family. Homodimer. Requires Mg(2+) as cofactor.

It localises to the cytoplasm. The catalysed reaction is IMP + L-aspartate + GTP = N(6)-(1,2-dicarboxyethyl)-AMP + GDP + phosphate + 2 H(+). It participates in purine metabolism; AMP biosynthesis via de novo pathway; AMP from IMP: step 1/2. Its function is as follows. Plays an important role in the salvage pathway for purine nucleotide biosynthesis. Catalyzes the first committed step in the biosynthesis of AMP from IMP. This chain is Adenylosuccinate synthetase, found in Trypanosoma brucei brucei (strain 927/4 GUTat10.1).